Here is a 310-residue protein sequence, read N- to C-terminus: Elongation factor Ts, mitochondrial (310 aa).

The transit peptide at 1–42 (MGFQVLRSVIQAPLAKRSFLCKSCPSGLRVLYNNILLSSRSY) directs the protein to the mitochondrion.

Belongs to the EF-Ts family.

Its subcellular location is the mitochondrion. Its function is as follows. Associates with the EF-Tu.GDP complex and induces the exchange of GDP to GTP. It remains bound to the aminoacyl-tRNA.EF-Tu.GTP complex up to the GTP hydrolysis stage on the ribosome. The protein is Elongation factor Ts, mitochondrial (tsf1) of Schizosaccharomyces japonicus (strain yFS275 / FY16936) (Fission yeast).